Consider the following 405-residue polypeptide: Arginine deiminase (405 aa).

The active-site Amidino-cysteine intermediate is Cys395.

It belongs to the arginine deiminase family.

It localises to the cytoplasm. The enzyme catalyses L-arginine + H2O = L-citrulline + NH4(+). Its pathway is amino-acid degradation; L-arginine degradation via ADI pathway; carbamoyl phosphate from L-arginine: step 1/2. This is Arginine deiminase from Rhodococcus jostii (strain RHA1).